Reading from the N-terminus, the 276-residue chain is Phosphatidylcholine synthase (276 aa).

The Cytoplasmic segment spans residues 1 to 30 (MGGQKEMADSVKTKLTGKLKAKKVTAPQAK). A helical transmembrane segment spans residues 31–51 (AFSVHLLTASGSFLAFLSVVA). The Periplasmic portion of the chain corresponds to 52-57 (ASDGRY). A helical transmembrane segment spans residues 58 to 78 (TAMWWWLGLALFVDGIDGPIA). The Cytoplasmic portion of the chain corresponds to 79–91 (RKLEVKYVLPNWS). Residues 92 to 112 (GELLDSIIDYVTYVLIPAFAL) traverse the membrane as a helical segment. Residues 113–115 (YQS) are Periplasmic-facing. The helical transmembrane segment at 116-136 (GFMGTNLSFISGAIIVVSSAI) threads the bilayer. Topologically, residues 137–146 (YYADTGMKTK) are cytoplasmic. A helical membrane pass occupies residues 147 to 167 (ENFFKGFPVVWNMVVFTLFIV). Topologically, residues 168–171 (RPGE) are periplasmic. Residues 172 to 192 (WVAFGTVVASAILSFLPINFL) traverse the membrane as a helical segment. The Cytoplasmic segment spans residues 193–202 (HPVRVVRLRP). The chain crosses the membrane as a helical span at residues 203–223 (LNLTIFLLWCAFGVIALYYML). Residues 224–230 (DAPLWVR) lie on the Periplasmic side of the membrane. Residues 231-251 (IGISVTGLYIYFIGAIMQLFP) traverse the membrane as a helical segment. Topologically, residues 252–276 (SLGREAALAKARKLVEKQQKSGEAP) are cytoplasmic.

This sequence belongs to the CDP-alcohol phosphatidyltransferase class-I family. It depends on Mn(2+) as a cofactor.

Its subcellular location is the cell inner membrane. The catalysed reaction is a CDP-1,2-diacyl-sn-glycerol + choline = a 1,2-diacyl-sn-glycero-3-phosphocholine + CMP + H(+). Condenses choline with CDP-diglyceride to produce phosphatidylcholine and CMP. This is Phosphatidylcholine synthase from Brucella melitensis biotype 1 (strain ATCC 23456 / CCUG 17765 / NCTC 10094 / 16M).